The sequence spans 502 residues: uncharacterized protein (502 aa).

Residues 1–21 (MKIFLVILSVFFFNGCFGLAY) traverse the membrane as a helical segment. 2 consecutive PLD phosphodiesterase domains span residues 162-189 (IKKR…GDNY) and 396-423 (TKHS…DPRS).

The protein belongs to the phospholipase D family. Cardiolipin synthase subfamily.

Its subcellular location is the cell membrane. This is an uncharacterized protein from Helicobacter pylori (strain J99 / ATCC 700824) (Campylobacter pylori J99).